We begin with the raw amino-acid sequence, 186 residues long: Ribosome-recycling factor (186 aa).

It belongs to the RRF family.

Its subcellular location is the cytoplasm. Functionally, responsible for the release of ribosomes from messenger RNA at the termination of protein biosynthesis. May increase the efficiency of translation by recycling ribosomes from one round of translation to another. This is Ribosome-recycling factor from Nitratidesulfovibrio vulgaris (strain DP4) (Desulfovibrio vulgaris).